The following is a 68-amino-acid chain: Large ribosomal subunit protein uL29 (68 aa).

The protein belongs to the universal ribosomal protein uL29 family.

The chain is Large ribosomal subunit protein uL29 from Chloroflexus aurantiacus (strain ATCC 29364 / DSM 637 / Y-400-fl).